The sequence spans 221 residues: Thiamine-phosphate synthase (221 aa).

4-amino-2-methyl-5-(diphosphooxymethyl)pyrimidine-binding positions include 47 to 51 and asparagine 79; that span reads QYREK. The Mg(2+) site is built by aspartate 80 and aspartate 99. Threonine 118 contacts 4-amino-2-methyl-5-(diphosphooxymethyl)pyrimidine. A 2-[(2R,5Z)-2-carboxy-4-methylthiazol-5(2H)-ylidene]ethyl phosphate-binding site is contributed by 144–146; it reads SFT. Lysine 147 contributes to the 4-amino-2-methyl-5-(diphosphooxymethyl)pyrimidine binding site. 2-[(2R,5Z)-2-carboxy-4-methylthiazol-5(2H)-ylidene]ethyl phosphate contacts are provided by residues glycine 175 and 195 to 196; that span reads VT.

It belongs to the thiamine-phosphate synthase family. It depends on Mg(2+) as a cofactor.

The catalysed reaction is 2-[(2R,5Z)-2-carboxy-4-methylthiazol-5(2H)-ylidene]ethyl phosphate + 4-amino-2-methyl-5-(diphosphooxymethyl)pyrimidine + 2 H(+) = thiamine phosphate + CO2 + diphosphate. The enzyme catalyses 2-(2-carboxy-4-methylthiazol-5-yl)ethyl phosphate + 4-amino-2-methyl-5-(diphosphooxymethyl)pyrimidine + 2 H(+) = thiamine phosphate + CO2 + diphosphate. It catalyses the reaction 4-methyl-5-(2-phosphooxyethyl)-thiazole + 4-amino-2-methyl-5-(diphosphooxymethyl)pyrimidine + H(+) = thiamine phosphate + diphosphate. It participates in cofactor biosynthesis; thiamine diphosphate biosynthesis; thiamine phosphate from 4-amino-2-methyl-5-diphosphomethylpyrimidine and 4-methyl-5-(2-phosphoethyl)-thiazole: step 1/1. In terms of biological role, condenses 4-methyl-5-(beta-hydroxyethyl)thiazole monophosphate (THZ-P) and 2-methyl-4-amino-5-hydroxymethyl pyrimidine pyrophosphate (HMP-PP) to form thiamine monophosphate (TMP). The chain is Thiamine-phosphate synthase from Caldicellulosiruptor saccharolyticus (strain ATCC 43494 / DSM 8903 / Tp8T 6331).